The primary structure comprises 178 residues: Bifunctional protein PyrR (178 aa).

The short motif at Ile-99–Thr-111 is the PRPP-binding element.

Belongs to the purine/pyrimidine phosphoribosyltransferase family. PyrR subfamily. As to quaternary structure, homodimer and homohexamer; in equilibrium.

It carries out the reaction UMP + diphosphate = 5-phospho-alpha-D-ribose 1-diphosphate + uracil. Regulates transcriptional attenuation of the pyrimidine nucleotide (pyr) operon by binding in a uridine-dependent manner to specific sites on pyr mRNA. This disrupts an antiterminator hairpin in the RNA and favors formation of a downstream transcription terminator, leading to a reduced expression of downstream genes. Functionally, also displays a weak uracil phosphoribosyltransferase activity which is not physiologically significant. This Clostridium novyi (strain NT) protein is Bifunctional protein PyrR.